A 322-amino-acid chain; its full sequence is MKKEDLRIVYMGTPDFAVEALRQLVEGGYNVVGVITMPDKPAGRGHKIQYSPVKQYALEQNLPLLQPEKLKDEAFVQALREWKADLQIVVAFRMLPEVVWNMPRLGTFNLHASLLPQYRGAAPINWAVINGDTETGITTFFLQHEIDTGKVIQQVRVPIADTDNVEVVHDKLMILGGKLVLETVDAILNDTVKPIAQEDMAVVGELRPAPKIFKETCRIDWNSPVKKVYDFIRGLSPYPAAWSELVSPEGEAVVMKIFESEKIYEAHQLPVGTVVTDGKKYIKVAVPDGFVSVLSLQLPGKKRLKTDELLRGFRLSDGYKMN.

Residue 113–116 (SLLP) participates in (6S)-5,6,7,8-tetrahydrofolate binding.

It belongs to the Fmt family.

The enzyme catalyses L-methionyl-tRNA(fMet) + (6R)-10-formyltetrahydrofolate = N-formyl-L-methionyl-tRNA(fMet) + (6S)-5,6,7,8-tetrahydrofolate + H(+). Functionally, attaches a formyl group to the free amino group of methionyl-tRNA(fMet). The formyl group appears to play a dual role in the initiator identity of N-formylmethionyl-tRNA by promoting its recognition by IF2 and preventing the misappropriation of this tRNA by the elongation apparatus. The protein is Methionyl-tRNA formyltransferase of Bacteroides thetaiotaomicron (strain ATCC 29148 / DSM 2079 / JCM 5827 / CCUG 10774 / NCTC 10582 / VPI-5482 / E50).